Consider the following 352-residue polypeptide: B1 bradykinin receptor (352 aa).

Residues 1 to 41 (MASWPPLELQSSNQSQLFPQNATACDNAPEAWDLLHRVLPT) lie on the Extracellular side of the membrane. Residues Asn-13 and Asn-21 are each glycosylated (N-linked (GlcNAc...) asparagine). Residues 42-62 (FIISICSFGLLGNLFVLLVFL) form a helical membrane-spanning segment. Topologically, residues 63–72 (LPRRRLNVAE) are cytoplasmic. A helical transmembrane segment spans residues 73 to 93 (IYLANLAASDLVFVLGLPFWA). At 94-110 (ENIWNQFNWPFGALLCR) the chain is on the extracellular side. A disulfide bond links Cys-109 and Cys-188. Residues 111-131 (GINGVIKANLFISIFLVVAIS) traverse the membrane as a helical segment. Residues 132-153 (QDRYCLLVHPMASRRRQRRRQA) are Cytoplasmic-facing. A helical transmembrane segment spans residues 154 to 174 (RVTCVLIWVVGGLLSIPTFLL). At 175-206 (RSIQAVPDLNITACILLLPHEAWHFARIVELN) the chain is on the extracellular side. Asn-184 is a glycosylation site (N-linked (GlcNAc...) asparagine). A helical transmembrane segment spans residues 207-227 (ILAFLLPLAAIVFFNYHILAS). Topologically, residues 228–250 (LRGREEVSRTRCGGRKDSKTTAL) are cytoplasmic. The helical transmembrane segment at 251–271 (ILTLVVAFLVCWAPYHFFAFL) threads the bilayer. Topologically, residues 272–294 (EFLFQVQAIRGCFWEDFIDLGLQ) are extracellular. Residues 295–315 (LANFLAFTNSSLNPVIYVFVG) traverse the membrane as a helical segment. Residues 316-352 (RLFRTKVWELYKQCTPKSLAPISSSHRKEIFQLFWRN) are Cytoplasmic-facing. Cys-329 is lipidated: S-palmitoyl cysteine.

Belongs to the G-protein coupled receptor 1 family. Bradykinin receptor subfamily. BDKRB1 sub-subfamily.

It is found in the cell membrane. In terms of biological role, this is a receptor for bradykinin. Could be a factor in chronic pain and inflammation. The polypeptide is B1 bradykinin receptor (BDKRB1) (Chlorocebus aethiops (Green monkey)).